The primary structure comprises 162 residues: Cyclic pyranopterin monophosphate synthase (162 aa).

Substrate contacts are provided by residues 75–77 (MCH) and 116–117 (ME). Asp-131 is an active-site residue.

The protein belongs to the MoaC family. As to quaternary structure, homohexamer; trimer of dimers.

It catalyses the reaction (8S)-3',8-cyclo-7,8-dihydroguanosine 5'-triphosphate = cyclic pyranopterin phosphate + diphosphate. It participates in cofactor biosynthesis; molybdopterin biosynthesis. In terms of biological role, catalyzes the conversion of (8S)-3',8-cyclo-7,8-dihydroguanosine 5'-triphosphate to cyclic pyranopterin monophosphate (cPMP). This chain is Cyclic pyranopterin monophosphate synthase, found in Staphylococcus epidermidis (strain ATCC 35984 / DSM 28319 / BCRC 17069 / CCUG 31568 / BM 3577 / RP62A).